The chain runs to 152 residues: Large ribosomal subunit protein uL22 (152 aa).

The span at 124–143 (APTKAASKKAAPAKQTTPAA) shows a compositional bias: low complexity. The tract at residues 124–152 (APTKAASKKAAPAKQTTPAATESKTEGAE) is disordered.

It belongs to the universal ribosomal protein uL22 family. Part of the 50S ribosomal subunit.

In terms of biological role, this protein binds specifically to 23S rRNA; its binding is stimulated by other ribosomal proteins, e.g. L4, L17, and L20. It is important during the early stages of 50S assembly. It makes multiple contacts with different domains of the 23S rRNA in the assembled 50S subunit and ribosome. Its function is as follows. The globular domain of the protein is located near the polypeptide exit tunnel on the outside of the subunit, while an extended beta-hairpin is found that lines the wall of the exit tunnel in the center of the 70S ribosome. The polypeptide is Large ribosomal subunit protein uL22 (Salinispora arenicola (strain CNS-205)).